Reading from the N-terminus, the 328-residue chain is UPF0421 protein SAUSA300_1870 (328 aa).

The next 4 helical transmembrane spans lie at 19–39, 61–81, 108–128, and 132–152; these read IAIFLTAVFCMALDLTPIYAI, LPATVIGAGFAVLFTYLFGDQ, VAVLTSLAMIPGIHDAYIFNF, and TLTAIIGLVTSGLINFMVFPP.

Belongs to the UPF0421 family.

Its subcellular location is the cell membrane. The sequence is that of UPF0421 protein SAUSA300_1870 from Staphylococcus aureus (strain USA300).